Reading from the N-terminus, the 1072-residue chain is DNA-directed RNA polymerase subunit beta (1072 aa).

This sequence belongs to the RNA polymerase beta chain family. In terms of assembly, in plastids the minimal PEP RNA polymerase catalytic core is composed of four subunits: alpha, beta, beta', and beta''. When a (nuclear-encoded) sigma factor is associated with the core the holoenzyme is formed, which can initiate transcription.

The protein resides in the plastid. It localises to the chloroplast. The enzyme catalyses RNA(n) + a ribonucleoside 5'-triphosphate = RNA(n+1) + diphosphate. In terms of biological role, DNA-dependent RNA polymerase catalyzes the transcription of DNA into RNA using the four ribonucleoside triphosphates as substrates. The polypeptide is DNA-directed RNA polymerase subunit beta (Cycas taitungensis (Prince sago)).